Consider the following 252-residue polypeptide: Probable phosphatase Shewmr4_2619 (252 aa).

Zn(2+)-binding residues include histidine 8, histidine 10, histidine 16, histidine 41, glutamate 74, histidine 102, histidine 132, aspartate 193, and histidine 195.

It belongs to the PHP family. Zn(2+) serves as cofactor.

This chain is Probable phosphatase Shewmr4_2619, found in Shewanella sp. (strain MR-4).